A 515-amino-acid polypeptide reads, in one-letter code: ATP synthase subunit alpha (515 aa).

171 to 178 (GDRQTGKT) is an ATP binding site.

The protein belongs to the ATPase alpha/beta chains family. In terms of assembly, F-type ATPases have 2 components, CF(1) - the catalytic core - and CF(0) - the membrane proton channel. CF(1) has five subunits: alpha(3), beta(3), gamma(1), delta(1), epsilon(1). CF(0) has three main subunits: a(1), b(2) and c(9-12). The alpha and beta chains form an alternating ring which encloses part of the gamma chain. CF(1) is attached to CF(0) by a central stalk formed by the gamma and epsilon chains, while a peripheral stalk is formed by the delta and b chains.

The protein localises to the cell inner membrane. The catalysed reaction is ATP + H2O + 4 H(+)(in) = ADP + phosphate + 5 H(+)(out). Its function is as follows. Produces ATP from ADP in the presence of a proton gradient across the membrane. The alpha chain is a regulatory subunit. The polypeptide is ATP synthase subunit alpha (Xylella fastidiosa (strain M12)).